We begin with the raw amino-acid sequence, 694 residues long: Putative bifunctional polynucleotide kinase/RNA ligase (694 aa).

The tract at residues 1–385 (MLHVSRLLAN…TKQALNNKLA (385 aa)) is ligase domain. The tract at residues 394–694 (KQLLVLIGIS…FNVCRDYLEF (301 aa)) is bifunctional 5'-OH polynucleotide kinase/polynucleotide 3'-phosphatase. 401–408 (GISGSGKS) provides a ligand contact to ATP.

It catalyses the reaction a 5'-end dephospho-2'-deoxyribonucleoside-DNA + ATP = a 5'-end 5'-phospho-2'-deoxyribonucleoside-DNA + ADP + H(+). It carries out the reaction ATP + (ribonucleotide)n-3'-hydroxyl + 5'-phospho-(ribonucleotide)m = (ribonucleotide)n+m + AMP + diphosphate.. Its function is as follows. Trifunctional enzyme that possesses a bifunctional polynucleotide kinase/phosphatase activity and an ATP-dependent RNA ligase activity. May therefore play a role to evade an RNA damage-based host response. The chain is Putative bifunctional polynucleotide kinase/RNA ligase (PNK/PNL) from Autographa californica nuclear polyhedrosis virus (AcMNPV).